The chain runs to 196 residues: uncharacterized protein (196 aa).

Residues valine 51 to valine 164 form the HD domain.

This is an uncharacterized protein from Rhodobacter capsulatus (strain ATCC BAA-309 / NBRC 16581 / SB1003).